The sequence spans 379 residues: RIB43A-like with coiled-coils protein 1 (379 aa).

2 coiled-coil regions span residues 43–111 (EALN…RCEL) and 285–337 (IRKV…EFRR).

It belongs to the RIB43A family. As to quaternary structure, microtubule inner protein component of sperm flagellar doublet microtubules.

The protein resides in the cytoplasm. It localises to the cytoskeleton. The protein localises to the flagellum axoneme. The chain is RIB43A-like with coiled-coils protein 1 (RIBC1) from Bos taurus (Bovine).